A 142-amino-acid polypeptide reads, in one-letter code: Prefoldin subunit alpha (142 aa).

Belongs to the prefoldin subunit alpha family. As to quaternary structure, heterohexamer of two alpha and four beta subunits.

The protein localises to the cytoplasm. In terms of biological role, molecular chaperone capable of stabilizing a range of proteins. Seems to fulfill an ATP-independent, HSP70-like function in archaeal de novo protein folding. In Methanosarcina mazei (strain ATCC BAA-159 / DSM 3647 / Goe1 / Go1 / JCM 11833 / OCM 88) (Methanosarcina frisia), this protein is Prefoldin subunit alpha.